A 130-amino-acid polypeptide reads, in one-letter code: Protachykinin-1 (130 aa).

Positions 1 to 19 (MKILVAVAVIFFISTQLSA) are cleaved as a signal peptide. The propeptide occupies 20–56 (EEIGANDDFNYWSDWSDSDQIKEEMPEPFEHLLQRIA). Met-68 and Met-107 each carry methionine amide.

It belongs to the tachykinin family. The substance P form is cleaved at Pro-59 by the prolyl endopeptidase FAP (seprase) activity (in vitro). Substance P is also cleaved and degraded by Angiotensin-converting enzyme (ACE) and neprilysin (MME).

The protein resides in the secreted. In terms of biological role, tachykinins are active peptides which excite neurons, evoke behavioral responses, are potent vasodilators and secretagogues, and contract (directly or indirectly) many smooth muscles. The protein is Protachykinin-1 (TAC1) of Bos taurus (Bovine).